Reading from the N-terminus, the 115-residue chain is UPF0597 protein HI_0855 (115 aa).

This sequence belongs to the UPF0597 family.

The chain is UPF0597 protein HI_0855 from Haemophilus influenzae (strain ATCC 51907 / DSM 11121 / KW20 / Rd).